The following is a 547-amino-acid chain: Chaperonin GroEL (547 aa).

Residues 30–33 (TLGP), Lys51, 87–91 (DGTTT), Gly415, 479–481 (NAA), and Asp495 each bind ATP.

Belongs to the chaperonin (HSP60) family. As to quaternary structure, forms a cylinder of 14 subunits composed of two heptameric rings stacked back-to-back. Interacts with the co-chaperonin GroES.

The protein resides in the cytoplasm. The enzyme catalyses ATP + H2O + a folded polypeptide = ADP + phosphate + an unfolded polypeptide.. In terms of biological role, together with its co-chaperonin GroES, plays an essential role in assisting protein folding. The GroEL-GroES system forms a nano-cage that allows encapsulation of the non-native substrate proteins and provides a physical environment optimized to promote and accelerate protein folding. The polypeptide is Chaperonin GroEL (Delftia acidovorans (strain DSM 14801 / SPH-1)).